The chain runs to 251 residues: uncharacterized protein (251 aa).

The first 18 residues, Met1–Ala18, serve as a signal peptide directing secretion.

This sequence belongs to the MlaA family.

This is an uncharacterized protein from Rickettsia typhi (strain ATCC VR-144 / Wilmington).